Consider the following 443-residue polypeptide: ATP-dependent protease ATPase subunit HslU (443 aa).

ATP-binding positions include I18, 60–65 (GVGKTE), D256, E321, and R393.

This sequence belongs to the ClpX chaperone family. HslU subfamily. As to quaternary structure, a double ring-shaped homohexamer of HslV is capped on each side by a ring-shaped HslU homohexamer. The assembly of the HslU/HslV complex is dependent on binding of ATP.

It localises to the cytoplasm. Functionally, ATPase subunit of a proteasome-like degradation complex; this subunit has chaperone activity. The binding of ATP and its subsequent hydrolysis by HslU are essential for unfolding of protein substrates subsequently hydrolyzed by HslV. HslU recognizes the N-terminal part of its protein substrates and unfolds these before they are guided to HslV for hydrolysis. The chain is ATP-dependent protease ATPase subunit HslU from Buchnera aphidicola subsp. Acyrthosiphon pisum (strain 5A).